Here is a 54-residue protein sequence, read N- to C-terminus: MQSLTLEQEFKLKVYKENLKKLTLKQSQKHLVEVLKQMMLKDNIIKYLIRNSYF.

It belongs to the ycf18/nblA family.

The protein localises to the plastid. It is found in the chloroplast. This is an uncharacterized protein from Cyanidium caldarium (Red alga).